A 290-amino-acid chain; its full sequence is 4-hydroxy-tetrahydrodipicolinate synthase (290 aa).

S44 lines the pyruvate pocket. Y132 functions as the Proton donor/acceptor in the catalytic mechanism. The active-site Schiff-base intermediate with substrate is K161. V202 lines the pyruvate pocket.

Belongs to the DapA family. As to quaternary structure, homotetramer; dimer of dimers.

The protein localises to the cytoplasm. It carries out the reaction L-aspartate 4-semialdehyde + pyruvate = (2S,4S)-4-hydroxy-2,3,4,5-tetrahydrodipicolinate + H2O + H(+). Its pathway is amino-acid biosynthesis; L-lysine biosynthesis via DAP pathway; (S)-tetrahydrodipicolinate from L-aspartate: step 3/4. In terms of biological role, catalyzes the condensation of (S)-aspartate-beta-semialdehyde [(S)-ASA] and pyruvate to 4-hydroxy-tetrahydrodipicolinate (HTPA). In Hydrogenobaculum sp. (strain Y04AAS1), this protein is 4-hydroxy-tetrahydrodipicolinate synthase.